Here is a 151-residue protein sequence, read N- to C-terminus: MKQIIRLITTLLLLSLIGITCAAVAKLHETDKKFKGVELPEKFLDDFNLEVGKLQYANLFRSKKDDITHSAGEIRIDQQGSFSRGEKKKKFKVYNLQAQTNGKSSKTVAHVEVFDTIDAKTKAEQNEVLALAKEAFTKSKDSGKLYQVIPN.

The first 22 residues, 1–22 (MKQIIRLITTLLLLSLIGITCA), serve as a signal peptide directing secretion.

The protein resides in the endoplasmic reticulum. Its subcellular location is the vacuole. In terms of biological role, has an essential role in the initiation of differentiation. Also required for cAMP signaling. The polypeptide is Differentiation-associated protein 2 (dia2) (Dictyostelium discoideum (Social amoeba)).